A 206-amino-acid chain; its full sequence is ATP phosphoribosyltransferase (206 aa).

It belongs to the ATP phosphoribosyltransferase family. Short subfamily. Heteromultimer composed of HisG and HisZ subunits.

It localises to the cytoplasm. The enzyme catalyses 1-(5-phospho-beta-D-ribosyl)-ATP + diphosphate = 5-phospho-alpha-D-ribose 1-diphosphate + ATP. It participates in amino-acid biosynthesis; L-histidine biosynthesis; L-histidine from 5-phospho-alpha-D-ribose 1-diphosphate: step 1/9. In terms of biological role, catalyzes the condensation of ATP and 5-phosphoribose 1-diphosphate to form N'-(5'-phosphoribosyl)-ATP (PR-ATP). Has a crucial role in the pathway because the rate of histidine biosynthesis seems to be controlled primarily by regulation of HisG enzymatic activity. In Brachyspira hyodysenteriae (strain ATCC 49526 / WA1), this protein is ATP phosphoribosyltransferase.